The primary structure comprises 156 residues: Small ribosomal subunit protein uS7 (156 aa).

Belongs to the universal ribosomal protein uS7 family. As to quaternary structure, part of the 30S ribosomal subunit. Contacts proteins S9 and S11.

One of the primary rRNA binding proteins, it binds directly to 16S rRNA where it nucleates assembly of the head domain of the 30S subunit. Is located at the subunit interface close to the decoding center, probably blocks exit of the E-site tRNA. The protein is Small ribosomal subunit protein uS7 of Salinispora tropica (strain ATCC BAA-916 / DSM 44818 / JCM 13857 / NBRC 105044 / CNB-440).